Reading from the N-terminus, the 170-residue chain is Lipoprotein signal peptidase (170 aa).

Helical transmembrane passes span 9 to 29, 72 to 92, and 95 to 117; these read FNIF…KYLV, IFFI…ALKE, and CITR…DRLF. Residues aspartate 124 and aspartate 146 contribute to the active site. A helical membrane pass occupies residues 143 to 163; that stretch reads NFADSYVVIGMILFLVYDFFI.

The protein belongs to the peptidase A8 family.

The protein localises to the cell inner membrane. The enzyme catalyses Release of signal peptides from bacterial membrane prolipoproteins. Hydrolyzes -Xaa-Yaa-Zaa-|-(S,diacylglyceryl)Cys-, in which Xaa is hydrophobic (preferably Leu), and Yaa (Ala or Ser) and Zaa (Gly or Ala) have small, neutral side chains.. It participates in protein modification; lipoprotein biosynthesis (signal peptide cleavage). Functionally, this protein specifically catalyzes the removal of signal peptides from prolipoproteins. The chain is Lipoprotein signal peptidase from Borrelia garinii subsp. bavariensis (strain ATCC BAA-2496 / DSM 23469 / PBi) (Borreliella bavariensis).